Consider the following 165-residue polypeptide: Chorismate pyruvate-lyase (165 aa).

Residues M35, R77, L115, and E156 each contribute to the substrate site.

Belongs to the UbiC family. In terms of assembly, monomer.

The protein resides in the cytoplasm. The enzyme catalyses chorismate = 4-hydroxybenzoate + pyruvate. It participates in cofactor biosynthesis; ubiquinone biosynthesis. Removes the pyruvyl group from chorismate, with concomitant aromatization of the ring, to provide 4-hydroxybenzoate (4HB) for the ubiquinone pathway. In Escherichia coli O17:K52:H18 (strain UMN026 / ExPEC), this protein is Chorismate pyruvate-lyase.